We begin with the raw amino-acid sequence, 211 residues long: Lysozyme g (211 aa).

An N-terminal signal peptide occupies residues 1–26 (MLGKNDPMCLVLVLLGLTALLGICQG). 2 cysteine pairs are disulfide-bonded: C30-C86 and C44-C55. Catalysis depends on residues E99 and D112.

It belongs to the glycosyl hydrolase 23 family. Granulocyte compartment of myelomonocytic cells.

It is found in the secreted. The enzyme catalyses Hydrolysis of (1-&gt;4)-beta-linkages between N-acetylmuramic acid and N-acetyl-D-glucosamine residues in a peptidoglycan and between N-acetyl-D-glucosamine residues in chitodextrins.. The sequence is that of Lysozyme g from Gallus gallus (Chicken).